The following is a 307-amino-acid chain: Probable thioesterase KK1J (307 aa).

Belongs to the AMT4 thioesterase family.

It participates in secondary metabolite biosynthesis. Its function is as follows. Probable thioesterase; part of the gene cluster that mediates the biosynthesis of KK-1, a novel cyclic depsipeptide with 10 residues which is a promising active compound with high activity against many plant pathogens, especially Botrytis cinerea. Within the pathway, kk1J is not essential for the biosynthesis of KK-1, but plays a role for efficient production via correction of peptide chain synthesis by kk1B. The nonribosomal peptide synthetase (NRPS) kk1B catalyzes the elongation and cyclization of the decapeptide chain composed of 1 D-lactic acid residue (D-Lac), 1 pipecolic acid residue (Pip), 1 aspartic acid residue (Asp), 1 isoleucine residue (Ile), 1 glycine residue (Gly), 1 tyrosine residue (Tyr) and 4 valine residues (Val). The Asp, Ile and 3 Val residues are N-methylated by the 5 methyltransferase domains from the NRPS (found in modules 3, 5, 6, 7 and 9), whereas the Tyr residue is O-methylated by the cluster encoded O-methyltransferase kk1A. The thioesterase kk1J is likely to be involved in the corrective mechanism of peptide chain synthesis. The D-lactate dehydrogenase kk1H is involved in the synthesis of D-lactic acid from pyruvic acid, which is recognized by the A domain of the first kk1B module. The pyrroline-5-carboxylate reductase kk1I is involved in the synthesis of the L-pipecolic acid residue of KK-1 from delta-1-pyrroline-5-carboxylate (P5C), a metabolic intermediate of lysine. It still is unclear how kk1C and kk1D are involved in the production of KK-1. The sequence is that of Probable thioesterase KK1J from Curvularia clavata.